The sequence spans 397 residues: Elongation factor Tu (397 aa).

Residues 10 to 207 (KPHVNIGTIG…ACDSYIPEPQ (198 aa)) form the tr-type G domain. Residues 19–26 (GHIDHGKT) are G1. 19–26 (GHIDHGKT) is a binding site for GTP. Thr-26 is a Mg(2+) binding site. A G2 region spans residues 60–64 (GITIA). The G3 stretch occupies residues 81 to 84 (DCPG). GTP-binding positions include 81–85 (DCPGH) and 136–139 (NKCD). The interval 136-139 (NKCD) is G4. The G5 stretch occupies residues 174–176 (SAL).

Belongs to the TRAFAC class translation factor GTPase superfamily. Classic translation factor GTPase family. EF-Tu/EF-1A subfamily. In terms of assembly, monomer.

It is found in the cytoplasm. It carries out the reaction GTP + H2O = GDP + phosphate + H(+). In terms of biological role, GTP hydrolase that promotes the GTP-dependent binding of aminoacyl-tRNA to the A-site of ribosomes during protein biosynthesis. This is Elongation factor Tu from Nitratidesulfovibrio vulgaris (strain DSM 19637 / Miyazaki F) (Desulfovibrio vulgaris).